The chain runs to 359 residues: Norspermidine sensor (359 aa).

A signal peptide spans 1–33 (MTNFCNEWVSYSQMIKRFLSLMVLNTVCYQASA).

Belongs to the bacterial solute-binding protein PotD/PotF family.

It is found in the periplasm. Acts as a sensor of norspermidine and enhances biofilm formation. When complexed to norspermidine, could interact with the periplasmic portion of MbaA to regulate its enzymatic activity. This chain is Norspermidine sensor (nspS), found in Vibrio cholerae serotype O1 (strain ATCC 39315 / El Tor Inaba N16961).